Here is a 402-residue protein sequence, read N- to C-terminus: Multidrug resistance protein MdtH (402 aa).

The Cytoplasmic segment spans residues 1 to 12 (MSRVSQARNLGK). Residues 13–33 (YFLLIDNMLVVLVFFVVFPLI) form a helical membrane-spanning segment. Topologically, residues 34–98 (SIRFVDQMGW…GFATMGIAHE (65 aa)) are periplasmic. Residues 99–116 (PWLLWFSCFLSGLGGTLF) traverse the membrane as a helical segment. Residues 117–138 (DPPRSALVVKLIRPEQRGRFFS) lie on the Cytoplasmic side of the membrane. Residues 139 to 159 (LLMMQDSAGAVIGALLGSWLL) traverse the membrane as a helical segment. The Periplasmic segment spans residues 160 to 164 (QYDFR). A helical transmembrane segment spans residues 165–185 (LVCATGAILFILCALFNAWLL). The Cytoplasmic segment spans residues 186–213 (PAWKLSTVRTPVREGMRRVMSDKRFVTY). A helical membrane pass occupies residues 214–234 (VLTLAGYYMLAVQVMLMLPIM). At 235–243 (VNDIAGSPA) the chain is on the periplasmic side. Residues 244 to 264 (AVKWMYAIEACLSLTLLYPIA) traverse the membrane as a helical segment. Residues 265–276 (RWSEKRFRLEHR) are Cytoplasmic-facing. Residues 277-297 (LMAGLLVMSLSMIPIGMVGNL) form a helical membrane-spanning segment. Topologically, residues 298–299 (QQ) are periplasmic. Residues 300 to 320 (LFTLICAFYIGSVIAEPARET) traverse the membrane as a helical segment. Residues 321-339 (LSASLADARARGSYMGFSR) are Cytoplasmic-facing. Residues 340-360 (LGLAIGGAIGYIGGGWLFDMG) traverse the membrane as a helical segment. The Periplasmic portion of the chain corresponds to 361–367 (KALTQPE). The helical transmembrane segment at 368-388 (LPWMMLGIIGFITFLALGWQF) threads the bilayer. Residues 389-402 (SHKRTPRRMLEPGA) lie on the Cytoplasmic side of the membrane.

This sequence belongs to the major facilitator superfamily. DHA1 family. MdtH (TC 2.A.1.2.21) subfamily.

The protein localises to the cell inner membrane. The protein is Multidrug resistance protein MdtH of Salmonella choleraesuis (strain SC-B67).